The primary structure comprises 106 residues: Small ribosomal subunit protein uS10 (106 aa).

Belongs to the universal ribosomal protein uS10 family. As to quaternary structure, part of the 30S ribosomal subunit.

Functionally, involved in the binding of tRNA to the ribosomes. This is Small ribosomal subunit protein uS10 from Pyrobaculum calidifontis (strain DSM 21063 / JCM 11548 / VA1).